The primary structure comprises 261 residues: tRNA 5-carboxymethoxyuridine methyltransferase (261 aa).

S-adenosyl-L-methionine-binding positions include Arg26, 52–53 (GG), Asp73, 102–103 (AQ), and His119.

Belongs to the class I-like SAM-binding methyltransferase superfamily. CmoM family.

It carries out the reaction 5-carboxymethoxyuridine(34) in tRNA + S-adenosyl-L-methionine = 5-methoxycarbonylmethoxyuridine(34) in tRNA + S-adenosyl-L-homocysteine. Catalyzes the methylation of 5-carboxymethoxyuridine (cmo5U) to form 5-methoxycarbonylmethoxyuridine (mcmo5U) at position 34 in tRNAs. Four tRNAs (tRNA(Ala1), tRNA(Ser1), tRNA(Pro3) and tRNA(Thr4)) are fully modified with mcmo5U in stationary-phase E.coli. Also present at low frequency in tRNA(Leu3) and tRNA(Val1). In Escherichia coli (strain K12), this protein is tRNA 5-carboxymethoxyuridine methyltransferase.